The sequence spans 103 residues: Small ribosomal subunit protein uS10 (103 aa).

Belongs to the universal ribosomal protein uS10 family. Part of the 30S ribosomal subunit.

In terms of biological role, involved in the binding of tRNA to the ribosomes. The sequence is that of Small ribosomal subunit protein uS10 from Cutibacterium acnes (strain DSM 16379 / KPA171202) (Propionibacterium acnes).